Consider the following 73-residue polypeptide: MKKNIHPDYKLVIASCSCGNVIEVNSTLGCNINLDVCSNCHPAYTNKKREAATGGRVDRFKKRFSFLESSKAE.

Zn(2+)-binding residues include C16, C18, C37, and C40.

The protein belongs to the bacterial ribosomal protein bL31 family. Type A subfamily. Part of the 50S ribosomal subunit. The cofactor is Zn(2+).

Binds the 23S rRNA. The protein is Large ribosomal subunit protein bL31 of Hamiltonella defensa subsp. Acyrthosiphon pisum (strain 5AT).